The chain runs to 349 residues: Probable FBD-associated F-box protein At5g38565 (349 aa).

Residues 1–47 (MDIFNGLPDDVLVKILSFVPTKVAVSTSILSKRWEFLWMWLPRLDFG) enclose the F-box domain. The region spanning 263-311 (CWNQPISVPECLLESLQIFNLSHYFGKQQDLDFVVYILKNACHLKTATI) is the FBD domain.

In Arabidopsis thaliana (Mouse-ear cress), this protein is Probable FBD-associated F-box protein At5g38565.